Consider the following 181-residue polypeptide: Inner membrane-spanning protein YciB (181 aa).

A run of 5 helical transmembrane segments spans residues 10–30 (LVIF…GALI), 50–70 (MHLI…ILHD), 80–100 (IVYA…KPIL), 118–138 (VTWY…YVAF), and 148–168 (FKVF…VFYL).

The protein belongs to the YciB family.

The protein localises to the cell inner membrane. Functionally, plays a role in cell envelope biogenesis, maintenance of cell envelope integrity and membrane homeostasis. In Shewanella piezotolerans (strain WP3 / JCM 13877), this protein is Inner membrane-spanning protein YciB.